A 202-amino-acid chain; its full sequence is Transcription factor IBH1 (202 aa).

A compositionally biased stretch (pro residues) spans 1–16; that stretch reads MDAKRTPPPPTPPNPN. Residues 1–33 form a disordered region; the sequence is MDAKRTPPPPTPPNPNPSVIGSGAAADGGGFGR. The bHLH domain occupies 136–185; that stretch reads TSAAARAVPPPPRQQGEPPRAEALRRLVPGGAGMEYSSLLEETADYLRSL.

Belongs to the bHLH protein family. As to quaternary structure, interacts with ILI1. Binds to ILI5/BUL1 and BC1. Interacts with BCL1 and BCL2. Highly expressed in roots and at lower levels in leaf blades, leaf sheaths, lamina joint, stems and panicles.

Functionally, atypical and probable non DNA-binding bHLH transcription factor that acts as a negative regulator of cell elongation and plant development. Binds the transcription factor ILI1 and forms a heterodimer of antagonistic bHLH transcription factors that function downstream of BZR1 to mediate brassinosteroid regulation of cell elongation and lamina inclination. This is Transcription factor IBH1 from Oryza sativa subsp. japonica (Rice).